A 163-amino-acid polypeptide reads, in one-letter code: Putative H/ACA ribonucleoprotein complex subunit 2-like protein (163 aa).

Residues 1–27 (MGKRNLDETMNESTVSEANGDATAPTT) form a disordered region.

It belongs to the eukaryotic ribosomal protein eL8 family. Component of the small nucleolar ribonucleoprotein particle containing H/ACA-type snoRNAs (H/ACA snoRNPs).

It localises to the nucleus. It is found in the nucleolus. Required for ribosome biogenesis. Part of a complex which catalyzes pseudouridylation of rRNA. This involves the isomerization of uridine such that the ribose is subsequently attached to C5, instead of the normal N1. Pseudouridine ('psi') residues may serve to stabilize the conformation of rRNAs. This Caenorhabditis elegans protein is Putative H/ACA ribonucleoprotein complex subunit 2-like protein.